We begin with the raw amino-acid sequence, 734 residues long: Photosystem I P700 chlorophyll a apoprotein A2 (734 aa).

Helical transmembrane passes span 46-69 (IFAS…FHVA), 135-158 (LYTG…LHLQ), 175-199 (LNHH…HVAI), 273-291 (IAHH…GHMY), 330-353 (IHFQ…QHMY), 369-395 (AALY…IFFI), 417-439 (AIKS…LYVH), and 517-535 (FLVH…LILV). Positions 559 and 568 each coordinate [4Fe-4S] cluster. The next 2 helical transmembrane spans lie at 575-596 (AFYL…YWHW) and 643-665 (LSVW…MFLI). 3 residues coordinate chlorophyll a: H654, M662, and Y670. W671 contributes to the phylloquinone binding site. Residues 707–727 (LVGLAHFSVGYIFTYAAFLIA) traverse the membrane as a helical segment.

This sequence belongs to the PsaA/PsaB family. The PsaA/B heterodimer binds the P700 chlorophyll special pair and subsequent electron acceptors. PSI consists of a core antenna complex that captures photons, and an electron transfer chain that converts photonic excitation into a charge separation. The eukaryotic PSI reaction center is composed of at least 11 subunits. P700 is a chlorophyll a/chlorophyll a' dimer, A0 is one or more chlorophyll a, A1 is one or both phylloquinones and FX is a shared 4Fe-4S iron-sulfur center. serves as cofactor.

Its subcellular location is the plastid. It localises to the chloroplast thylakoid membrane. It carries out the reaction reduced [plastocyanin] + hnu + oxidized [2Fe-2S]-[ferredoxin] = oxidized [plastocyanin] + reduced [2Fe-2S]-[ferredoxin]. Its function is as follows. PsaA and PsaB bind P700, the primary electron donor of photosystem I (PSI), as well as the electron acceptors A0, A1 and FX. PSI is a plastocyanin-ferredoxin oxidoreductase, converting photonic excitation into a charge separation, which transfers an electron from the donor P700 chlorophyll pair to the spectroscopically characterized acceptors A0, A1, FX, FA and FB in turn. Oxidized P700 is reduced on the lumenal side of the thylakoid membrane by plastocyanin. This chain is Photosystem I P700 chlorophyll a apoprotein A2, found in Illicium oligandrum (Star anise).